A 554-amino-acid polypeptide reads, in one-letter code: Tetratricopeptide repeat protein 34 (554 aa).

TPR repeat units lie at residues 38 to 71 (ETSCLLAADALYRLGRLDDAHKSLLVALSQRPQA), 166 to 199 (SESLLVRARCYGLLGQKKTAMFDFNAILREEPGN), 200 to 233 (VKALCGRALVHLALDQLQEAVDDMVSALKLDPGT), 294 to 327 (PSWRLLLTDILTGLGKYQEAGTHLQEALHLTPSS), 328 to 361 (EAAQARQGLLQLKKGDVSAAVHGLQCLAERDTQD), 411 to 445 (NPYHLRLRVACLTQLQEYDRALRDLDRVLQHPAED), 452 to 485 (SEDFCTRGRLLLSLGDKDGAAGAFTQALALAPAQ), and 500 to 533 (ASVFLIHGQRCLEEEHFEEAWTAVQNGLLVDPSH).

The protein is Tetratricopeptide repeat protein 34 (Ttc34) of Mus musculus (Mouse).